The sequence spans 185 residues: Ribosome-recycling factor (185 aa).

Belongs to the RRF family.

The protein localises to the cytoplasm. Responsible for the release of ribosomes from messenger RNA at the termination of protein biosynthesis. May increase the efficiency of translation by recycling ribosomes from one round of translation to another. In Myxococcus xanthus (strain DK1622), this protein is Ribosome-recycling factor.